Here is a 425-residue protein sequence, read N- to C-terminus: Protein CLP1 homolog (425 aa).

ATP is bound by residues glutamate 18, lysine 59, and 121–126; that span reads DVGKST.

Belongs to the Clp1 family. Clp1 subfamily.

Its subcellular location is the nucleus. Its function is as follows. Required for endonucleolytic cleavage during polyadenylation-dependent pre-mRNA 3'-end formation. This is Protein CLP1 homolog (cbc) from Drosophila grimshawi (Hawaiian fruit fly).